The following is a 275-amino-acid chain: NH(3)-dependent NAD(+) synthetase (275 aa).

Position 50-57 (50-57 (GISGGVDS)) interacts with ATP. D56 provides a ligand contact to Mg(2+). R147 provides a ligand contact to deamido-NAD(+). ATP is bound at residue T167. E172 contacts Mg(2+). Residues K180 and D187 each coordinate deamido-NAD(+). Residues K196 and T218 each coordinate ATP. 267-268 (HK) contacts deamido-NAD(+).

Belongs to the NAD synthetase family. As to quaternary structure, homodimer.

The enzyme catalyses deamido-NAD(+) + NH4(+) + ATP = AMP + diphosphate + NAD(+) + H(+). It participates in cofactor biosynthesis; NAD(+) biosynthesis; NAD(+) from deamido-NAD(+) (ammonia route): step 1/1. Functionally, catalyzes the ATP-dependent amidation of deamido-NAD to form NAD. Uses ammonia as a nitrogen source. The chain is NH(3)-dependent NAD(+) synthetase from Pseudomonas aeruginosa (strain UCBPP-PA14).